The sequence spans 282 residues: Anamorsin homolog (282 aa).

Residues 5 to 151 form an N-terminal SAM-like domain region; it reads VDTNNFVLLL…EVGAKTALSL (147 aa). The segment at 152–196 is linker; it reads SFAPKPAQPKAETSAAQIWTLSAQDIDDEDVDLLDSDTLLDEDDL. [2Fe-2S] cluster contacts are provided by Cys208, Cys218, Cys221, and Cys223. The interval 208 to 223 is fe-S binding site A; it reads CGPGSGKKKACKNCTC. Residues Cys243, Cys246, Cys254, and Cys257 each contribute to the [4Fe-4S] cluster site. 2 short sequence motifs (cx2C motif) span residues 243–246 and 254–257; these read CGSC and CSTC. The interval 243 to 257 is fe-S binding site B; sequence CGSCYLGDAFRCSTC.

The protein belongs to the anamorsin family. In terms of assembly, monomer. Requires [2Fe-2S] cluster as cofactor. It depends on [4Fe-4S] cluster as a cofactor.

The protein resides in the cytoplasm. It is found in the mitochondrion intermembrane space. Functionally, component of the cytosolic iron-sulfur (Fe-S) protein assembly (CIA) machinery. Required for the maturation of extramitochondrial Fe-S proteins. Part of an electron transfer chain functioning in an early step of cytosolic Fe-S biogenesis, facilitating the de novo assembly of a [4Fe-4S] cluster on the cytosolic Fe-S scaffold complex. Electrons are transferred from NADPH via a FAD- and FMN-containing diflavin oxidoreductase. Together with the diflavin oxidoreductase, also required for the assembly of the diferric tyrosyl radical cofactor of ribonucleotide reductase (RNR), probably by providing electrons for reduction during radical cofactor maturation in the catalytic small subunit. This Nematostella vectensis (Starlet sea anemone) protein is Anamorsin homolog.